We begin with the raw amino-acid sequence, 275 residues long: MTTTNLSAVADPLRLYDETFASRLLLGTARYPSPQSLEDAVRVSNPAMLTVALRRQSAGSPEGGAGFWKMLRELGVPVLPNTAGCYSADEAYTLAQMSRELFETDWIKLEVIGDDYTLQPDTLALPAAAERLIRDGFKVLPYCTEDLVLCRRLLDVGCQALMPWAAPIGTGRGPTNPYGLRLLRERLPNVPLIVDAGLGVPSHATQVMEWGYDAVLLNTAVAQAGDPVAMAQAFAMATQAGRLARLSGPMPERDVAQASTPVVGLPFWHAEEKQA.

Lys-108 serves as the catalytic Schiff-base intermediate with DXP. 1-deoxy-D-xylulose 5-phosphate-binding positions include Gly-169, 196-197 (AG), and 218-219 (NT).

It belongs to the ThiG family. Homotetramer. Forms heterodimers with either ThiH or ThiS.

It localises to the cytoplasm. It catalyses the reaction [ThiS sulfur-carrier protein]-C-terminal-Gly-aminoethanethioate + 2-iminoacetate + 1-deoxy-D-xylulose 5-phosphate = [ThiS sulfur-carrier protein]-C-terminal Gly-Gly + 2-[(2R,5Z)-2-carboxy-4-methylthiazol-5(2H)-ylidene]ethyl phosphate + 2 H2O + H(+). It participates in cofactor biosynthesis; thiamine diphosphate biosynthesis. Functionally, catalyzes the rearrangement of 1-deoxy-D-xylulose 5-phosphate (DXP) to produce the thiazole phosphate moiety of thiamine. Sulfur is provided by the thiocarboxylate moiety of the carrier protein ThiS. In vitro, sulfur can be provided by H(2)S. This Ralstonia pickettii (strain 12J) protein is Thiazole synthase.